Reading from the N-terminus, the 110-residue chain is Insulin-1 (110 aa).

The N-terminal stretch at 1-24 (MALWMRFLPLLALLVLWEPKPAQA) is a signal peptide. Intrachain disulfides connect cysteine 31-cysteine 96, cysteine 43-cysteine 109, and cysteine 95-cysteine 100. Positions 57–87 (EVEDPQVPQLELGGGPEAGDLQTLALEVARQ) are cleaved as a propeptide — c peptide.

It belongs to the insulin family. Heterodimer of a B chain and an A chain linked by two disulfide bonds.

It is found in the secreted. Its function is as follows. Insulin decreases blood glucose concentration. It increases cell permeability to monosaccharides, amino acids and fatty acids. It accelerates glycolysis, the pentose phosphate cycle, and glycogen synthesis in liver. This is Insulin-1 (Ins1) from Rattus norvegicus (Rat).